We begin with the raw amino-acid sequence, 823 residues long: Spindle pole body component SPC97 (823 aa).

It belongs to the TUBGCP family. As to quaternary structure, interacts with TUB4, SPC72 and SPC98.

It localises to the nucleus. The protein resides in the cytoplasm. It is found in the cytoskeleton. Its subcellular location is the microtubule organizing center. The protein localises to the spindle pole body. Involved in microtubule organization by the microtubule organizing center, the spindle pole body (SPB). Probably part of the microtubule attachment site at the SPB. The polypeptide is Spindle pole body component SPC97 (SPC97) (Saccharomyces cerevisiae (strain ATCC 204508 / S288c) (Baker's yeast)).